The chain runs to 465 residues: GTPase Der (465 aa).

EngA-type G domains are found at residues 3 to 166 (FLVA…LNEY) and 184 to 358 (IHFS…ACAN). Residues 9–16 (GRANVGKS), 56–60 (DTGGI), 118–121 (NKVD), 190–197 (GRPNVGKS), 237–241 (DTAGV), and 302–305 (NKWD) each bind GTP. The KH-like domain maps to 359–443 (KKITTADATC…PIVFEFKQSE (85 aa)). Residues 446-465 (FADRKNKRSKDEGSKSKKVK) form a disordered region.

This sequence belongs to the TRAFAC class TrmE-Era-EngA-EngB-Septin-like GTPase superfamily. EngA (Der) GTPase family. Associates with the 50S ribosomal subunit.

In terms of biological role, GTPase that plays an essential role in the late steps of ribosome biogenesis. The chain is GTPase Der from Francisella tularensis subsp. mediasiatica (strain FSC147).